The chain runs to 408 residues: Arginine biosynthesis bifunctional protein ArgJ (408 aa).

Thr-162, Lys-188, Thr-199, Glu-280, Asn-403, and Ser-408 together coordinate substrate. Catalysis depends on Thr-199, which acts as the Nucleophile.

This sequence belongs to the ArgJ family. In terms of assembly, heterotetramer of two alpha and two beta chains.

The protein localises to the cytoplasm. It catalyses the reaction N(2)-acetyl-L-ornithine + L-glutamate = N-acetyl-L-glutamate + L-ornithine. The catalysed reaction is L-glutamate + acetyl-CoA = N-acetyl-L-glutamate + CoA + H(+). Its pathway is amino-acid biosynthesis; L-arginine biosynthesis; L-ornithine and N-acetyl-L-glutamate from L-glutamate and N(2)-acetyl-L-ornithine (cyclic): step 1/1. The protein operates within amino-acid biosynthesis; L-arginine biosynthesis; N(2)-acetyl-L-ornithine from L-glutamate: step 1/4. In terms of biological role, catalyzes two activities which are involved in the cyclic version of arginine biosynthesis: the synthesis of N-acetylglutamate from glutamate and acetyl-CoA as the acetyl donor, and of ornithine by transacetylation between N(2)-acetylornithine and glutamate. The sequence is that of Arginine biosynthesis bifunctional protein ArgJ from Ruegeria pomeroyi (strain ATCC 700808 / DSM 15171 / DSS-3) (Silicibacter pomeroyi).